The primary structure comprises 396 residues: ATP-dependent RNA helicase eIF4A (396 aa).

The Q motif motif lies at 23–51; the sequence is YEFDDMNLNEKLLRGVFGYGFNKPSAIQQ. Positions 54 to 223 constitute a Helicase ATP-binding domain; sequence IMPIIEGNDV…AKFMQNPVRI (170 aa). An ATP-binding site is contributed by 67–74; that stretch reads AQSGTGKT. A DEAD box motif is present at residues 171-174; it reads DEAD. A Helicase C-terminal domain is found at 234–395; that stretch reads GIKQFYVNVE…ELPSDIGTLF (162 aa).

Belongs to the DEAD box helicase family. eIF4A subfamily. As to quaternary structure, component of the eIF4F complex, which composition varies with external and internal environmental conditions. It is composed of at least eIF4A, eIF4E and eIF4G.

The protein localises to the cytoplasm. The catalysed reaction is ATP + H2O = ADP + phosphate + H(+). Its function is as follows. ATP-dependent RNA helicase which is a subunit of the eIF4F complex involved in cap recognition and is required for mRNA binding to ribosome. In the current model of translation initiation, eIF4A unwinds RNA secondary structures in the 5'-UTR of mRNAs which is necessary to allow efficient binding of the small ribosomal subunit, and subsequent scanning for the initiator codon. The protein is ATP-dependent RNA helicase eIF4A (TIF1) of Candida glabrata (strain ATCC 2001 / BCRC 20586 / JCM 3761 / NBRC 0622 / NRRL Y-65 / CBS 138) (Yeast).